We begin with the raw amino-acid sequence, 415 residues long: MAQANLSEILFKPSFKHPETSTLVLRARSKISAELHSTLEGNTVSNWYRMLNPLLWAWRGVDPIEINEVLARIAVADVEHTNDKWLDTVVGYRNGNWIYEWVHQGMLWQQRALEQQDPLTGGQYWLNAANFYSIAGYPHLKGDELAEQAEALSNRAYEEAALLLPYQLKELEFRIEGGSSITGFLHLPEKGEAPFPTVLMCGSLDTLQTDYHRLFRDYLAPHGIAMLTIDMPSIGSSYKWKLTQDSSFLHQQVLTQLTTVPWIDHQRVTAFGFRFGANVAVRLAYLEPQRLRGVACLGPVVHRLLCDSSTQKHVPDMYMDVLASRMGMANASDHVLKVELNSYSLKTQGLLGRRCPTPMLAGYWEQDPLSPKEESQLIVSSSMDGKLIAIPRKPVYSSFHKALLQMSHWMKDKMR.

The protein belongs to the FrsA family.

It carries out the reaction a carboxylic ester + H2O = an alcohol + a carboxylate + H(+). In terms of biological role, catalyzes the hydrolysis of esters. This Serratia proteamaculans (strain 568) protein is Esterase FrsA.